Reading from the N-terminus, the 210-residue chain is Guanylate kinase (210 aa).

In terms of domain architecture, Guanylate kinase-like spans 8–188 (GNLFIIAAPS…SLASLEHIVL (181 aa)). 15 to 22 (APSGAGKS) contributes to the ATP binding site.

It belongs to the guanylate kinase family.

Its subcellular location is the cytoplasm. It carries out the reaction GMP + ATP = GDP + ADP. In terms of biological role, essential for recycling GMP and indirectly, cGMP. The protein is Guanylate kinase of Idiomarina loihiensis (strain ATCC BAA-735 / DSM 15497 / L2-TR).